The following is a 373-amino-acid chain: Leucine aminopeptidase 1 (373 aa).

Residues 1 to 18 (MKLLSVLALSATASSVLG) form the signal peptide. A propeptide spanning residues 19–75 (ASIPVDTRAEKFLIELAPGETRWVTEEEKWALKESGQDFFDITDEEVGFTAAVAQPA) is cleaved from the precursor. The Zn(2+) site is built by His176 and Asp195. N-linked (GlcNAc...) asparagine glycosylation is present at Asn196. Positions 234 and 261 each coordinate Zn(2+). N-linked (GlcNAc...) asparagine glycosylation is present at Asn288. Cys310 and Cys314 are oxidised to a cystine. His343 contacts Zn(2+). An N-linked (GlcNAc...) asparagine glycan is attached at Asn348.

It belongs to the peptidase M28 family. M28E subfamily. In terms of assembly, monomer. Zn(2+) serves as cofactor.

The protein localises to the secreted. Its function is as follows. Extracellular aminopeptidase that allows assimilation of proteinaceous substrates. The polypeptide is Leucine aminopeptidase 1 (LAP1) (Arthroderma gypseum (strain ATCC MYA-4604 / CBS 118893) (Microsporum gypseum)).